A 208-amino-acid polypeptide reads, in one-letter code: Uracil phosphoribosyltransferase (208 aa).

Residues arginine 78, arginine 103, and 130-138 contribute to the 5-phospho-alpha-D-ribose 1-diphosphate site; that span reads DPMLATGGS. Uracil contacts are provided by residues isoleucine 193 and 198–200; that span reads GDA. Aspartate 199 lines the 5-phospho-alpha-D-ribose 1-diphosphate pocket.

It belongs to the UPRTase family. Requires Mg(2+) as cofactor.

It catalyses the reaction UMP + diphosphate = 5-phospho-alpha-D-ribose 1-diphosphate + uracil. It participates in pyrimidine metabolism; UMP biosynthesis via salvage pathway; UMP from uracil: step 1/1. Its activity is regulated as follows. Allosterically activated by GTP. Its function is as follows. Catalyzes the conversion of uracil and 5-phospho-alpha-D-ribose 1-diphosphate (PRPP) to UMP and diphosphate. The sequence is that of Uracil phosphoribosyltransferase from Glaesserella parasuis serovar 5 (strain SH0165) (Haemophilus parasuis).